Here is a 267-residue protein sequence, read N- to C-terminus: Tryptophan synthase alpha chain (267 aa).

Residues glutamate 51 and aspartate 62 each act as proton acceptor in the active site.

It belongs to the TrpA family. As to quaternary structure, tetramer of two alpha and two beta chains.

It carries out the reaction (1S,2R)-1-C-(indol-3-yl)glycerol 3-phosphate + L-serine = D-glyceraldehyde 3-phosphate + L-tryptophan + H2O. Its pathway is amino-acid biosynthesis; L-tryptophan biosynthesis; L-tryptophan from chorismate: step 5/5. In terms of biological role, the alpha subunit is responsible for the aldol cleavage of indoleglycerol phosphate to indole and glyceraldehyde 3-phosphate. This chain is Tryptophan synthase alpha chain, found in Prochlorococcus marinus (strain SARG / CCMP1375 / SS120).